The primary structure comprises 190 residues: FPAMPLSSLFANAVLRAQHLHELAADTYKEFERAYIPEGQRYFLQNAQSTGCFSEVIPTPANKDEAQQRSDVELLRFSLLLIQSWLGPVQFLEKAYANELVFGTSDRVYEKLKDLEEGIQALMRELEDGSPRAGQILKQTYDKFDTNMRSDDALLKNYGLLSCFKKDLHKAETYLRVMKCRRFVESSCAF.

H19 is a Zn(2+) binding site. C52 and C163 are oxidised to a cystine. S105 bears the Phosphoserine mark. E172 serves as a coordination point for Zn(2+). C180 and C188 form a disulfide bridge.

It belongs to the somatotropin/prolactin family.

The protein resides in the secreted. Plays an important role in growth control. Its major role in stimulating body growth is to stimulate the liver and other tissues to secrete IGF1. It stimulates both the differentiation and proliferation of myoblasts. It also stimulates amino acid uptake and protein synthesis in muscle and other tissues. The chain is Somatotropin (GH1) from Balaenoptera borealis (Sei whale).